The following is a 375-amino-acid chain: METKISVLIIEYFAVKRKLISDLINSSPKLQVIATASNSKFATNKLKKHKPEVILMNLEENNIKDILFLEEKNSLNKTIPIVVTSSNQNLINIAASKGADDLILVSKNKKSHEIKKEQIINSLLAYGSISIKNKIACNKDMKTKNYERANFILNHKNDISSLNQLEEHAKEKTLNEKEIKKLKLRKFDIIAIGVSAGGPVALKSILPEIPESFPPIIIVQHMPKGFTEEFAKNLNNLCKISVKETTNNEILKQGYAYISSGGYHTKIKKIDGNYQIKTLDGKHINGHKPSIGVLFQSIAEIAKDKAIAIIMTGMGNDGSREIGDIKKAGGLTIAQDKESSMVFGMPKIAIKENNIDYIVPLSHMVKLLKAILINS.

In terms of domain architecture, Response regulatory spans 6-120 (SVLIIEYFAV…SHEIKKEQII (115 aa)). Residues 183 to 375 (KLRKFDIIAI…KLLKAILINS (193 aa)) form the CheB-type methylesterase domain. Residues Ser195, His221, and Asp317 contribute to the active site.

It carries out the reaction [protein]-L-glutamate 5-O-methyl ester + H2O = L-glutamyl-[protein] + methanol + H(+). In Borreliella burgdorferi (strain ATCC 35210 / DSM 4680 / CIP 102532 / B31) (Borrelia burgdorferi), this protein is Probable protein-glutamate methylesterase BB_0415.